Consider the following 1303-residue polypeptide: DNA-directed RNA polymerase subunit beta (1303 aa).

This sequence belongs to the RNA polymerase beta chain family. In terms of assembly, the RNAP catalytic core consists of 2 alpha, 1 beta, 1 beta' and 1 omega subunit. When a sigma factor is associated with the core the holoenzyme is formed, which can initiate transcription.

It carries out the reaction RNA(n) + a ribonucleoside 5'-triphosphate = RNA(n+1) + diphosphate. In terms of biological role, DNA-dependent RNA polymerase catalyzes the transcription of DNA into RNA using the four ribonucleoside triphosphates as substrates. The chain is DNA-directed RNA polymerase subunit beta from Chlorobaculum tepidum (strain ATCC 49652 / DSM 12025 / NBRC 103806 / TLS) (Chlorobium tepidum).